A 513-amino-acid chain; its full sequence is Maturase K (513 aa).

It belongs to the intron maturase 2 family. MatK subfamily.

The protein resides in the plastid. The protein localises to the chloroplast. Its function is as follows. Usually encoded in the trnK tRNA gene intron. Probably assists in splicing its own and other chloroplast group II introns. The sequence is that of Maturase K from Cyrilla racemiflora (Swamp titi).